The sequence spans 131 residues: Large ribosomal subunit protein bL19 (131 aa).

It belongs to the bacterial ribosomal protein bL19 family.

Its function is as follows. This protein is located at the 30S-50S ribosomal subunit interface and may play a role in the structure and function of the aminoacyl-tRNA binding site. The polypeptide is Large ribosomal subunit protein bL19 (Afipia carboxidovorans (strain ATCC 49405 / DSM 1227 / KCTC 32145 / OM5) (Oligotropha carboxidovorans)).